The chain runs to 308 residues: Small ribosomal subunit protein uS2 (308 aa).

Ser2 carries the N-acetylserine modification. Laminin-binding stretches follow at residues 161–180 (IPCNNKGPHSVGLMWWMLAR) and 205–229 (RDPEEIEKEEQAAAEKAVGKEEFQG). [DE]-W-[ST] repeat units follow at residues 230-232 (EWT), 245-247 (DWS), 279-281 (DWS), 288-290 (DWS), and 306-308 (DWS). The tract at residues 242-308 (EVADWSEGVQ…DWGGATADWS (67 aa)) is laminin-binding. The disordered stretch occupies residues 262–308 (AGIEAPGKPAPAEVYAEDWSAQPATEDWSAAPTAQAGDWGGATADWS).

It belongs to the universal ribosomal protein uS2 family. As to quaternary structure, monomer (37LRP) and homodimer (67LR). Component of the small ribosomal subunit. Mature ribosomes consist of a small (40S) and a large (60S) subunit. The 40S subunit contains about 33 different proteins and 1 molecule of RNA (18S). The 60S subunit contains about 49 different proteins and 3 molecules of RNA (28S, 5.8S and 5S). Interacts with rps21. Interacts with several laminins including at least lamb1. Interacts with mdk. Acylated. Acylation may be a prerequisite for conversion of the monomeric 37 kDa laminin receptor precursor (37LRP) to the mature dimeric 67 kDa laminin receptor (67LR), and may provide a mechanism for membrane association. In terms of processing, cleaved by stromelysin-3 (ST3) at the cell surface. Cleavage by stromelysin-3 may be a mechanism to alter cell-extracellular matrix interactions.

Its subcellular location is the cell membrane. The protein resides in the cytoplasm. It localises to the nucleus. Its function is as follows. Required for the assembly and/or stability of the 40S ribosomal subunit. Required for the processing of the 20S rRNA-precursor to mature 18S rRNA in a late step of the maturation of 40S ribosomal subunits. Also functions as a cell surface receptor for laminin. Plays a role in cell adhesion to the basement membrane and in the consequent activation of signaling transduction pathways. May play a role in cell fate determination and tissue morphogenesis. This Danio rerio (Zebrafish) protein is Small ribosomal subunit protein uS2 (rpsa).